The sequence spans 680 residues: MERRVVKPPGQDMVVERLKSRYGLAGRCPVEENDMTGVWAALMNQQHELSDFDQTKYKRRIVTSPDGLDTYSSGDKVGSSPRYYSDGRNHPTPPFCSSFKHLNVNCLDDELDSFHDLKKWETEKELMEDDHRDGASKITKQSFKEMETDALMTSMASGLETECCSGSIDSPLKQAVYPRPKVSKKQGLLPHEINQIYDELYHIHMKLQYETTAQKKFAEELQKREQFLAEREQLLFSHETALSKIKGVKEEVLTRFQILKEQHGTEIEHLTEALKEKNKENKRMRSSFDTLRELNDNLRKQLNEVSEENKKMEIQAKRVQARLDNLQRKYEFMTVQRLKGDSHAAHEVKSSKQEKAPAPKPFKAALNGQVYELLTVFMDWISDCHLSKVEPEEPGVDGGKPPAKPSQRSDIQEKCVKLLPMMTEQLQWMPLVSAKLHEPFVRFIYWSLRQLDASARQSTMASTLRRLGEDVFKGVTMKGTQDNSLEHSVENKAKTAVFFKSSSLPLRFLSTLIVLRTVTQADYLAQAFDSLCLDLKTDEGKTLFLEYQAIPVILKHLRISSKGLLSNVIDSLLQMTVESKSLQPFLEACSNSLFFRTCSVLLRTPKLDLHILEKLSIILQKLSKIKSNKKLFEVFTIHLMLQEIQRTTHPEHAFLCINLNSTLFNLGLTKCNSLVTSTSH.

Thr-63 bears the Phosphothreonine mark. Ser-64 is subject to Phosphoserine. Residues 260 to 339 (KEQHGTEIEH…YEFMTVQRLK (80 aa)) are a coiled coil. Positions 390 to 410 (EPEEPGVDGGKPPAKPSQRSD) are disordered. Residue Ser-484 is modified to Phosphoserine.

This chain is Coiled-coil domain-containing protein 138 (Ccdc138), found in Mus musculus (Mouse).